A 598-amino-acid chain; its full sequence is Phenylalanine--tRNA ligase beta subunit, cytoplasmic (598 aa).

The B5 domain occupies 303–383 (LAVYDMEVPL…IAYGFNNIPT (81 aa)). Positions 361, 367, 370, and 371 each coordinate Mg(2+).

Belongs to the phenylalanyl-tRNA synthetase beta subunit family. Type 2 subfamily. As to quaternary structure, tetramer of two alpha and two beta subunits. Mg(2+) is required as a cofactor.

It localises to the cytoplasm. The protein localises to the cytosol. It carries out the reaction tRNA(Phe) + L-phenylalanine + ATP = L-phenylalanyl-tRNA(Phe) + AMP + diphosphate + H(+). The chain is Phenylalanine--tRNA ligase beta subunit, cytoplasmic from Arabidopsis thaliana (Mouse-ear cress).